Consider the following 431-residue polypeptide: MIDIQLLRKDIETVAARLAGRKFQLDVNTFNALEAERKQIQSGTEELQNRRNTLSKQIGALKGKGEDTSAVMAEVAGIGDELKASAARLDVLQAEISKFMLAIPNLPHESVPVGKDEEDNVELRKVGTPRAFDFEVRDHVDIGAALGLDFDVAAKITGSRFSVMKGGIARLHRALAQFMLDTHTEEHGYTECYTPYIVNADSLQGTGQLPKFEADLFAVKKGGQEGEGEALYLIPTAEVPLTNIVRDEILAADALPVRMTAHSPCFRSEAGSYGRDTRGMIRQHQFDKVEMVQVVHPEKSYEALDEMCGHAENILKKLGLPYRVITLCTGDMGFGASKTYDLEVWLPAQNTYREISSVSNCEAFQARRMQARFRNAQGKPELTHTLNGSGLAVGRTLVAVLENYQQADGSVIIPEVLHPYMGGLTRLLPQA.

Residue 236-238 (TAE) coordinates L-serine. 267-269 (RSE) contacts ATP. Glutamate 290 serves as a coordination point for L-serine. 354–357 (EISS) is an ATP binding site. Position 389 (serine 389) interacts with L-serine.

Belongs to the class-II aminoacyl-tRNA synthetase family. Type-1 seryl-tRNA synthetase subfamily. In terms of assembly, homodimer. The tRNA molecule binds across the dimer.

The protein localises to the cytoplasm. It catalyses the reaction tRNA(Ser) + L-serine + ATP = L-seryl-tRNA(Ser) + AMP + diphosphate + H(+). It carries out the reaction tRNA(Sec) + L-serine + ATP = L-seryl-tRNA(Sec) + AMP + diphosphate + H(+). It functions in the pathway aminoacyl-tRNA biosynthesis; selenocysteinyl-tRNA(Sec) biosynthesis; L-seryl-tRNA(Sec) from L-serine and tRNA(Sec): step 1/1. Its function is as follows. Catalyzes the attachment of serine to tRNA(Ser). Is also able to aminoacylate tRNA(Sec) with serine, to form the misacylated tRNA L-seryl-tRNA(Sec), which will be further converted into selenocysteinyl-tRNA(Sec). This Herminiimonas arsenicoxydans protein is Serine--tRNA ligase.